The chain runs to 514 residues: Maltose/maltodextrin transport system permease protein MalF (514 aa).

The Cytoplasmic portion of the chain corresponds to 1–16 (MDVIKKKHWWQSDQLK). A helical membrane pass occupies residues 17–36 (WSVIGLLGLLVGYLVVLMYV). Topologically, residues 37–39 (QGE) are periplasmic. Residues 40-57 (YLFAIMTLILSSAGLYIF) form a helical membrane-spanning segment. Residues 58–69 (ANRKTYAWRYVY) are Cytoplasmic-facing. Residues 70–92 (PGLAGMGLFVLFPLVCTIAIAFT) traverse the membrane as a helical segment. Residues 93–283 (NYSSTNQLTF…QKPFFAIFVW (191 aa)) are Periplasmic-facing. Residues 281 to 505 (FVWTVVFSVL…LLVGALAIVN (225 aa)) enclose the ABC transmembrane type-1 domain. A helical transmembrane segment spans residues 284–306 (TVVFSVLTVVLTVAVGMVLACLV). At 307-318 (QWEALKGKAIYR) the chain is on the cytoplasmic side. Residues 319–341 (VLLILPYAVPSFISILIFKGLFN) traverse the membrane as a helical segment. Residues 342–369 (QSFGEINMMLSALFGIKPAWFSDPNTAR) lie on the Periplasmic side of the membrane. The helical transmembrane segment at 370-392 (AMVIIVNTWLGYPYMMILCMGLL) threads the bilayer. The Cytoplasmic segment spans residues 393–412 (KAIPDDLYEASAMDGAGPFQ). Residues 413–435 (NFFKITLPLLIKPLTPLMIASFA) form a helical membrane-spanning segment. Topologically, residues 436–483 (FNFNNFVLIQLLTNGGPDRLGTTTPAGYTDLLVSYTYRIAFEGGGGQD) are periplasmic. The chain crosses the membrane as a helical span at residues 484 to 506 (FGLAAAIATLIFLLVGALAIVNL). The Cytoplasmic portion of the chain corresponds to 507-514 (KATRMKFD).

The protein belongs to the binding-protein-dependent transport system permease family. MalFG subfamily. The complex is composed of two ATP-binding proteins (MalK), two transmembrane proteins (MalG and MalF) and a solute-binding protein (MalE).

The protein localises to the cell inner membrane. Functionally, part of the ABC transporter complex MalEFGK involved in maltose/maltodextrin import. Probably responsible for the translocation of the substrate across the membrane. The sequence is that of Maltose/maltodextrin transport system permease protein MalF (malF) from Salmonella typhimurium (strain LT2 / SGSC1412 / ATCC 700720).